A 278-amino-acid polypeptide reads, in one-letter code: Shikimate dehydrogenase (NADP(+)) (278 aa).

Shikimate contacts are provided by residues 19–21 and Thr-66; that span reads SRS. The Proton acceptor role is filled by Lys-70. An NADP(+)-binding site is contributed by Asp-82. Positions 91 and 107 each coordinate shikimate. NADP(+) contacts are provided by residues 133–137, 157–162, and Ile-222; these read GAGGA and NRTRAK. Position 224 (Tyr-224) interacts with shikimate. Gly-245 contributes to the NADP(+) binding site.

It belongs to the shikimate dehydrogenase family. Homodimer.

The catalysed reaction is shikimate + NADP(+) = 3-dehydroshikimate + NADPH + H(+). Its pathway is metabolic intermediate biosynthesis; chorismate biosynthesis; chorismate from D-erythrose 4-phosphate and phosphoenolpyruvate: step 4/7. Functionally, involved in the biosynthesis of the chorismate, which leads to the biosynthesis of aromatic amino acids. Catalyzes the reversible NADPH linked reduction of 3-dehydroshikimate (DHSA) to yield shikimate (SA). The polypeptide is Shikimate dehydrogenase (NADP(+)) (Dinoroseobacter shibae (strain DSM 16493 / NCIMB 14021 / DFL 12)).